The following is a 322-amino-acid chain: N-acetyl-gamma-glutamyl-phosphate reductase 2 (322 aa).

Residue cysteine 117 is part of the active site.

It belongs to the NAGSA dehydrogenase family. Type 2 subfamily.

The protein localises to the cytoplasm. The catalysed reaction is N-acetyl-L-glutamate 5-semialdehyde + phosphate + NADP(+) = N-acetyl-L-glutamyl 5-phosphate + NADPH + H(+). It functions in the pathway amino-acid biosynthesis; L-arginine biosynthesis; N(2)-acetyl-L-ornithine from L-glutamate: step 3/4. Its function is as follows. Catalyzes the NADPH-dependent reduction of N-acetyl-5-glutamyl phosphate to yield N-acetyl-L-glutamate 5-semialdehyde. The sequence is that of N-acetyl-gamma-glutamyl-phosphate reductase 2 from Nostoc sp. (strain PCC 7120 / SAG 25.82 / UTEX 2576).